The sequence spans 234 residues: Glucosamine-6-phosphate deaminase (234 aa).

Catalysis depends on D63, which acts as the Proton acceptor; for enolization step. N129 serves as the catalytic For ring-opening step. H131 serves as the catalytic Proton acceptor; for ring-opening step. E136 serves as the catalytic For ring-opening step.

Belongs to the glucosamine/galactosamine-6-phosphate isomerase family. NagB subfamily.

It catalyses the reaction alpha-D-glucosamine 6-phosphate + H2O = beta-D-fructose 6-phosphate + NH4(+). It functions in the pathway amino-sugar metabolism; N-acetylneuraminate degradation; D-fructose 6-phosphate from N-acetylneuraminate: step 5/5. Catalyzes the reversible isomerization-deamination of glucosamine 6-phosphate (GlcN6P) to form fructose 6-phosphate (Fru6P) and ammonium ion. In Listeria monocytogenes serotype 4a (strain HCC23), this protein is Glucosamine-6-phosphate deaminase.